An 81-amino-acid polypeptide reads, in one-letter code: Acyl carrier protein 2 (81 aa).

Residues 1–79 (MTETEILERI…DVIGAVQSLL (79 aa)) form the Carrier domain. Position 39 is an O-(pantetheine 4'-phosphoryl)serine (serine 39).

This sequence belongs to the acyl carrier protein (ACP) family. In terms of processing, 4'-phosphopantetheine is transferred from CoA to a specific serine of apo-ACP by AcpS. This modification is essential for activity because fatty acids are bound in thioester linkage to the sulfhydryl of the prosthetic group.

It localises to the cytoplasm. Its pathway is lipid metabolism; fatty acid biosynthesis. Carrier of the growing fatty acid chain in fatty acid biosynthesis. In Ralstonia nicotianae (strain ATCC BAA-1114 / GMI1000) (Ralstonia solanacearum), this protein is Acyl carrier protein 2.